The following is a 339-amino-acid chain: Malate dehydrogenase 3, cytoplasmic (339 aa).

NAD(+) is bound by residues 22-23 (NI), aspartate 49, and glycine 96. Oxaloacetate is bound at residue arginine 105. NAD(+)-binding residues include glutamine 119 and asparagine 138. Residues asparagine 138, arginine 169, histidine 194, and serine 249 each coordinate oxaloacetate. Histidine 194 acts as the Proton acceptor in catalysis.

It belongs to the LDH/MDH superfamily. MDH type 2 family. Expressed in rosette leaves at low levels.

The protein localises to the cytoplasm. The enzyme catalyses (S)-malate + NAD(+) = oxaloacetate + NADH + H(+). In terms of biological role, catalyzes a reversible NAD-dependent dehydrogenase reaction involved in central metabolism and redox homeostasis between organelle compartments. The sequence is that of Malate dehydrogenase 3, cytoplasmic from Arabidopsis thaliana (Mouse-ear cress).